We begin with the raw amino-acid sequence, 531 residues long: Glucose-6-phosphate exchanger SLC37A1 (531 aa).

A helical membrane pass occupies residues 18-38 (QWYRAFIFMLTFLLYASFHLS). The tract at residues 53 to 72 (CTAGDGPESPFSDPSSSTRH) is disordered. 11 helical membrane-spanning segments follow: residues 100 to 120 (GALD…SGII), 129 to 149 (YLTF…LGYF), 157 to 177 (FYVV…PSVV), 192 to 214 (IMGI…AGYW), 222 to 242 (SFIV…LFLI), 332 to 352 (LCLL…PLYI), 364 to 384 (GELS…AGVI), 392 to 412 (ASTC…FSSV), 419 to 439 (ATIA…ALIT), 464 to 484 (AIID…AGLI), and 488 to 508 (GWSN…LFLV).

It belongs to the major facilitator superfamily. Organophosphate:Pi antiporter (OPA) (TC 2.A.1.4) family.

The protein resides in the endoplasmic reticulum membrane. The enzyme catalyses D-glucose 6-phosphate(in) + phosphate(out) = D-glucose 6-phosphate(out) + phosphate(in). With respect to regulation, inhibited by vanadate but not by chlorogenic acid. Inorganic phosphate and glucose-6-phosphate antiporter. May transport cytoplasmic glucose-6-phosphate into the lumen of the endoplasmic reticulum and translocate inorganic phosphate into the opposite direction. Independent of a lumenal glucose-6-phosphatase. May not play a role in homeostatic regulation of blood glucose levels. This is Glucose-6-phosphate exchanger SLC37A1 from Mus musculus (Mouse).